A 546-amino-acid chain; its full sequence is CTP synthase (546 aa).

Positions 1–265 are amidoligase domain; sequence MTKYIFVTGG…DDIIAEQLQL (265 aa). CTP is bound at residue Ser-13. Ser-13 contributes to the UTP binding site. Residues 14-19 and Asp-71 contribute to the ATP site; that span reads SLGKGI. Residues Asp-71 and Glu-139 each contribute to the Mg(2+) site. CTP is bound by residues 146 to 148, 186 to 191, and Lys-222; these read DIE and KTKPTQ. Residues 186–191 and Lys-222 each bind UTP; that span reads KTKPTQ. The Glutamine amidotransferase type-1 domain occupies 290–542; it reads KIAMVGKYVD…VKAALAHQAD (253 aa). Gly-351 is a binding site for L-glutamine. Cys-378 (nucleophile; for glutamine hydrolysis) is an active-site residue. L-glutamine is bound by residues 379-382, Glu-402, and Arg-469; that span reads LGMQ. Active-site residues include His-515 and Glu-517.

It belongs to the CTP synthase family. Homotetramer.

It carries out the reaction UTP + L-glutamine + ATP + H2O = CTP + L-glutamate + ADP + phosphate + 2 H(+). The enzyme catalyses L-glutamine + H2O = L-glutamate + NH4(+). It catalyses the reaction UTP + NH4(+) + ATP = CTP + ADP + phosphate + 2 H(+). Its pathway is pyrimidine metabolism; CTP biosynthesis via de novo pathway; CTP from UDP: step 2/2. Its activity is regulated as follows. Allosterically activated by GTP, when glutamine is the substrate; GTP has no effect on the reaction when ammonia is the substrate. The allosteric effector GTP functions by stabilizing the protein conformation that binds the tetrahedral intermediate(s) formed during glutamine hydrolysis. Inhibited by the product CTP, via allosteric rather than competitive inhibition. Functionally, catalyzes the ATP-dependent amination of UTP to CTP with either L-glutamine or ammonia as the source of nitrogen. Regulates intracellular CTP levels through interactions with the four ribonucleotide triphosphates. The polypeptide is CTP synthase (Chromobacterium violaceum (strain ATCC 12472 / DSM 30191 / JCM 1249 / CCUG 213 / NBRC 12614 / NCIMB 9131 / NCTC 9757 / MK)).